Reading from the N-terminus, the 125-residue chain is 13 kDa ribonucleoprotein-associated protein (125 aa).

This sequence belongs to the eukaryotic ribosomal protein eL8 family. In terms of assembly, component of the U3 snoRNP particle. Binds to the C'/D and B/C motifs in U3 snoRNA. Component of the 25S U4/U6.U5 tri-snRNP particle, a subcomplex of the spliceosome. Binds to the 5' stem-loop of U4 snRNA.

Its subcellular location is the nucleus. It localises to the nucleolus. In terms of biological role, common component of the spliceosome and rRNA processing machinery. In association with the spliceosomal U4/U6.U5 tri-snRNP particle, required for splicing of pre-mRNA. In association with box C/D snoRNPs, required for processing of pre-ribosomal RNA (rRNA) and site-specific 2'-O-methylation of substrate RNAs. Essential for the accumulation and stability of U4 snRNA, U6 snRNA, and box C/D snoRNAs. This Schizosaccharomyces pombe (strain 972 / ATCC 24843) (Fission yeast) protein is 13 kDa ribonucleoprotein-associated protein (snu13).